The chain runs to 470 residues: NADH-quinone oxidoreductase subunit D (470 aa).

Residues 1–18 (MTPSTSTPHTSTAPHTST) show a composition bias toward low complexity. The interval 1–37 (MTPSTSTPHTSTAPHTSTGQSTDGAAQPGDGSSAYEA) is disordered.

Belongs to the complex I 49 kDa subunit family. In terms of assembly, NDH-1 is composed of 14 different subunits. Subunits NuoB, C, D, E, F, and G constitute the peripheral sector of the complex.

It localises to the cell membrane. The catalysed reaction is a quinone + NADH + 5 H(+)(in) = a quinol + NAD(+) + 4 H(+)(out). In terms of biological role, NDH-1 shuttles electrons from NADH, via FMN and iron-sulfur (Fe-S) centers, to quinones in the respiratory chain. The immediate electron acceptor for the enzyme in this species is believed to be a menaquinone. Couples the redox reaction to proton translocation (for every two electrons transferred, four hydrogen ions are translocated across the cytoplasmic membrane), and thus conserves the redox energy in a proton gradient. The protein is NADH-quinone oxidoreductase subunit D of Frankia alni (strain DSM 45986 / CECT 9034 / ACN14a).